Consider the following 108-residue polypeptide: Immunoglobulin kappa variable 11-125 (108 aa).

The interval 1-23 (DVQMIQSPSSLSASLGDIVTMTC) is framework-1. A disulfide bond links cysteine 23 and cysteine 88. A complementarity-determining-1 region spans residues 24 to 34 (QASQGTSINLN). Positions 35–49 (WFQQKPGKAPKLLIY) are framework-2. The segment at 50 to 56 (GASILED) is complementarity-determining-2. The tract at residues 57–88 (GVPSRFSGSRYGTDFTLTISSLEDEDMATYFC) is framework-3. The interval 89–97 (LQHSYLPYT) is complementarity-determining-3. The tract at residues 98 to 108 (FGGGTKLEIKR) is framework-4.

The chain is Immunoglobulin kappa variable 11-125 from Mus musculus (Mouse).